Here is a 158-residue protein sequence, read N- to C-terminus: Cyclic pyranopterin monophosphate synthase (158 aa).

Substrate contacts are provided by residues 76-78 and 114-115; these read LCH and ME. Aspartate 129 is an active-site residue.

Belongs to the MoaC family. Homohexamer; trimer of dimers.

It carries out the reaction (8S)-3',8-cyclo-7,8-dihydroguanosine 5'-triphosphate = cyclic pyranopterin phosphate + diphosphate. It participates in cofactor biosynthesis; molybdopterin biosynthesis. Functionally, catalyzes the conversion of (8S)-3',8-cyclo-7,8-dihydroguanosine 5'-triphosphate to cyclic pyranopterin monophosphate (cPMP). This is Cyclic pyranopterin monophosphate synthase from Shewanella woodyi (strain ATCC 51908 / MS32).